Consider the following 1949-residue polypeptide: Protein GREB1 (1949 aa).

Disordered stretches follow at residues 52-77 (EGGS…GPPN), 302-334 (ILSN…GGGN), and 1085-1210 (EALE…GQRS). A compositionally biased stretch (acidic residues) spans 59 to 68 (NEEEEEEGEG). Composition is skewed to basic and acidic residues over residues 1085–1095 (EALESDAEKLS) and 1110–1126 (TSEK…RSHD). A compositionally biased stretch (low complexity) spans 1127 to 1147 (SASSSLSSKASGSALGGESSA). The span at 1166 to 1178 (PAEEGRAPGEKQR) shows a compositional bias: basic and acidic residues. The helical transmembrane segment at 1868-1888 (DLLFSGLLLYLCDSFVGASFL) threads the bilayer.

The protein belongs to the GREB1 family. In terms of tissue distribution, expressed in proliferating prostatic tissue and prostate cancer.

The protein localises to the membrane. May play a role in estrogen-stimulated cell proliferation. Acts as a regulator of hormone-dependent cancer growth in breast and prostate cancers. This Homo sapiens (Human) protein is Protein GREB1 (GREB1).